Consider the following 444-residue polypeptide: MTDALPVREETIFAPASGFGRAAVAVVRVSGPAAGPALDQLAGGRPEPRRLSLRRLRDPGTGNILDQALVAWLPGPATATGEDMAELHLHGGLAVRAAVLRALGRVPGCRPAEAGAFSRRAFLNGRIDLTEAEGIADLIDAETEAQRVQALRQLDGALGRQVAAWRETGIELLAGAEAALDFADEGDVDEDGLDAALAGRAAALRDAIRAALADGRRGERLREGFCVVLAGAPNAGKSTLLNALSGRDAAIVSDIPGTTRDAIEVRCDLGGLPVVLVDTAGLRETADVIEAEGVRRTHHRIRSADLVLHLVPADGEAGPEDFAEVPVLRVRTKSDLPSGAPGEGGLAVSAVTGAGLDALLDAIQGSAASALGGGDALVTRERHREALSRAAGHLDRVATAPAGFPPELVAEDLRLAVRALGEVGGHVGVEEMLDRLFAGFCIGK.

(6S)-5-formyl-5,6,7,8-tetrahydrofolate-binding residues include R28, E86, and R126. One can recognise a TrmE-type G domain in the interval 224–368; the sequence is GFCVVLAGAP…LLDAIQGSAA (145 aa). N234 contributes to the K(+) binding site. Residues 234–239, 253–259, and 278–281 each bind GTP; these read NAGKST, SDIPGTT, and DTAG. S238 contributes to the Mg(2+) binding site. Positions 253, 255, and 258 each coordinate K(+). Residue T259 coordinates Mg(2+). K444 is a binding site for (6S)-5-formyl-5,6,7,8-tetrahydrofolate.

The protein belongs to the TRAFAC class TrmE-Era-EngA-EngB-Septin-like GTPase superfamily. TrmE GTPase family. In terms of assembly, homodimer. Heterotetramer of two MnmE and two MnmG subunits. K(+) serves as cofactor.

Its subcellular location is the cytoplasm. Its function is as follows. Exhibits a very high intrinsic GTPase hydrolysis rate. Involved in the addition of a carboxymethylaminomethyl (cmnm) group at the wobble position (U34) of certain tRNAs, forming tRNA-cmnm(5)s(2)U34. The chain is tRNA modification GTPase MnmE from Methylorubrum populi (strain ATCC BAA-705 / NCIMB 13946 / BJ001) (Methylobacterium populi).